The chain runs to 261 residues: MQYEWRKAELIGQLLNLGVTPGGVLLVHSSFRSVRPLEDGPLGLIEALRAALGPGGTLVMPSWSGLDDEPFDPATSPVTPDLGVVSDTFWRLPNVKRSAHPFAFAAAGPQAEQIISDPLPLPPHSPASPVARVHELDGQVLLLGVGHDANTTLHLAELMAKVPYGVPRHCTILQDGKLVRVDYLENDHCCERFALADRWLKEKSLQKEGPVGHAFARLIRSRDIVATALGQLGRDPLIFLHPPEGGMRRMRCRSPVDWLSS.

Belongs to the antibiotic N-acetyltransferase family.

The enzyme catalyses a 2-deoxystreptamine antibiotic + acetyl-CoA = an N(3)-acetyl-2-deoxystreptamine antibiotic + CoA + H(+). Resistance to antibiotics containing the 2-deoxy-streptamine ring including gentamicin, kanamycin, tobramycin, neomycin and apramycin. The chain is Aminoglycoside N(3)-acetyltransferase IV (aacC4) from Salmonella sp.